Reading from the N-terminus, the 141-residue chain is Translation initiation factor 2 subunit beta (141 aa).

Belongs to the eIF-2-beta/eIF-5 family. In terms of assembly, heterotrimer composed of an alpha, a beta and a gamma chain.

Functionally, eIF-2 functions in the early steps of protein synthesis by forming a ternary complex with GTP and initiator tRNA. The polypeptide is Translation initiation factor 2 subunit beta (Thermofilum pendens (strain DSM 2475 / Hrk 5)).